A 561-amino-acid chain; its full sequence is Microtubule-associated protein VP6 (561 aa).

Interacts with VP2.

The protein localises to the virion. It localises to the host cytoplasm. The protein resides in the host cytoskeleton. Minor inner capsid component. Displays NTPase and RNA 5'-triphosphatase (RTPase) activities. May function as a cofactor of polymerase VP2. Associates with microtubules and plays a role in the formation, structural organization and morphology of viral inclusions, where the assembly of cores and the replication of viral RNA occur. This is Microtubule-associated protein VP6 (S6) from Lymantria dispar cypovirus 1 (isolate Rao) (LdCPV-1).